Here is a 428-residue protein sequence, read N- to C-terminus: Kynureninase (428 aa).

Pyridoxal 5'-phosphate-binding positions include T104, T105, 132 to 135 (FPSD), D213, H216, and Y238. K239 is subject to N6-(pyridoxal phosphate)lysine. Residues W267 and T295 each contribute to the pyridoxal 5'-phosphate site.

Belongs to the kynureninase family. As to quaternary structure, homodimer. Pyridoxal 5'-phosphate serves as cofactor.

It carries out the reaction L-kynurenine + H2O = anthranilate + L-alanine + H(+). The enzyme catalyses 3-hydroxy-L-kynurenine + H2O = 3-hydroxyanthranilate + L-alanine + H(+). Its pathway is amino-acid degradation; L-kynurenine degradation; L-alanine and anthranilate from L-kynurenine: step 1/1. The protein operates within cofactor biosynthesis; NAD(+) biosynthesis; quinolinate from L-kynurenine: step 2/3. Its function is as follows. Catalyzes the cleavage of L-kynurenine (L-Kyn) and L-3-hydroxykynurenine (L-3OHKyn) into anthranilic acid (AA) and 3-hydroxyanthranilic acid (3-OHAA), respectively. This is Kynureninase from Geobacillus thermodenitrificans (strain NG80-2).